The primary structure comprises 376 residues: Copper-containing nitrite reductase (376 aa).

A signal peptide (tat-type signal) is located at residues 1–33 (MSEQFQMTRRSMLAGAAIAGAVTPLIGAVSAHA). 2 Plastocyanin-like domains span residues 98-193 (MTFN…IMVL) and 258-359 (GAVG…FAVT). Residues H131, H136, H171, C172, H181, M186, and H342 each coordinate Cu cation.

The protein belongs to the multicopper oxidase family. Homotrimer. Cu(2+) is required as a cofactor. The cofactor is Cu(+). It depends on FAD as a cofactor. Predicted to be exported by the Tat system. The position of the signal peptide cleavage has not been experimentally proven.

The protein resides in the periplasm. The enzyme catalyses nitric oxide + Fe(III)-[cytochrome c] + H2O = Fe(II)-[cytochrome c] + nitrite + 2 H(+). It participates in nitrogen metabolism; nitrate reduction (denitrification); dinitrogen from nitrate: step 2/4. The sequence is that of Copper-containing nitrite reductase (nirK) from Rhizobium meliloti (strain 1021) (Ensifer meliloti).